Consider the following 1770-residue polypeptide: Transposon Ty2-DR3 Gag-Pol polyprotein (1770 aa).

Polar residues-rich tracts occupy residues 1–11, 19–39, 49–60, 366–390, 399–408, and 415–435; these read MESQQLHQNPH, ASVT…SASN, KVNSQQETTPGT, VSRT…NSSK, IATSSKFSRV, and ESTV…GQQQ. Disordered regions lie at residues 1–89 and 355–449; these read MESQ…QQHG and SQYK…SNDE. Residues 295–397 form an RNA-binding region; it reads ENNINVSDRL…SSKPRAAKAH (103 aa). Aspartate 457 serves as the catalytic For protease activity; shared with dimeric partner. The segment at 579-636 is integrase-type zinc finger-like; the sequence is NVNKSKSVNKYPYPLIHRMLGHANFRSIQKSLKKNAVTYLKESDIEWSNASTYQCPDC. An Integrase catalytic domain is found at 656-831; that stretch reads ESYEPFQYLH…AGLDITTILP (176 aa). Aspartate 667 and aspartate 732 together coordinate Mg(2+). 2 disordered regions span residues 1005-1038 and 1057-1205; these read GGTI…MIDL and GGTE…TEIE. Composition is skewed to polar residues over residues 1009-1024 and 1065-1082; these read ESDT…FTAR and QRNS…STPS. Positions 1193-1227 match the Bipartite nuclear localization signal motif; the sequence is KKRSLEDNETEIEVSRDTWNNKNMRSLEPPRSKKR. Residues 1353–1491 form the Reverse transcriptase Ty1/copia-type domain; sequence NDYYITQLDI…DILGLEIKYQ (139 aa). Residues aspartate 1361, aspartate 1442, aspartate 1443, aspartate 1625, glutamate 1667, and aspartate 1700 each contribute to the Mg(2+) site. One can recognise an RNase H Ty1/copia-type domain in the interval 1625–1767; it reads DASYGNQPYY…IKTFKLLTNK (143 aa).

As to quaternary structure, the capsid protein forms a homotrimer, from which the VLPs are assembled. The protease is a homodimer, whose active site consists of two apposed aspartic acid residues. Post-translationally, initially, virus-like particles (VLPs) are composed of the structural unprocessed proteins Gag and Gag-Pol, and also contain the host initiator methionine tRNA (tRNA(i)-Met) which serves as a primer for minus-strand DNA synthesis, and a dimer of genomic Ty RNA. Processing of the polyproteins occurs within the particle and proceeds by an ordered pathway, called maturation. First, the protease (PR) is released by autocatalytic cleavage of the Gag-Pol polyprotein, and this cleavage is a prerequisite for subsequent processing at the remaining sites to release the mature structural and catalytic proteins. Maturation takes place prior to the RT reaction and is required to produce transposition-competent VLPs.

It is found in the cytoplasm. The protein resides in the nucleus. The enzyme catalyses DNA(n) + a 2'-deoxyribonucleoside 5'-triphosphate = DNA(n+1) + diphosphate. It catalyses the reaction Endonucleolytic cleavage to 5'-phosphomonoester.. Capsid protein (CA) is the structural component of the virus-like particle (VLP), forming the shell that encapsulates the retrotransposons dimeric RNA genome. The particles are assembled from trimer-clustered units and there are holes in the capsid shells that allow for the diffusion of macromolecules. CA also has nucleocapsid-like chaperone activity, promoting primer tRNA(i)-Met annealing to the multipartite primer-binding site (PBS), dimerization of Ty2 RNA and initiation of reverse transcription. Functionally, the aspartyl protease (PR) mediates the proteolytic cleavages of the Gag and Gag-Pol polyproteins after assembly of the VLP. In terms of biological role, reverse transcriptase/ribonuclease H (RT) is a multifunctional enzyme that catalyzes the conversion of the retro-elements RNA genome into dsDNA within the VLP. The enzyme displays a DNA polymerase activity that can copy either DNA or RNA templates, and a ribonuclease H (RNase H) activity that cleaves the RNA strand of RNA-DNA heteroduplexes during plus-strand synthesis and hydrolyzes RNA primers. The conversion leads to a linear dsDNA copy of the retrotransposon that includes long terminal repeats (LTRs) at both ends. Its function is as follows. Integrase (IN) targets the VLP to the nucleus, where a subparticle preintegration complex (PIC) containing at least integrase and the newly synthesized dsDNA copy of the retrotransposon must transit the nuclear membrane. Once in the nucleus, integrase performs the integration of the dsDNA into the host genome. This Saccharomyces cerevisiae (strain ATCC 204508 / S288c) (Baker's yeast) protein is Transposon Ty2-DR3 Gag-Pol polyprotein (TY2B-DR3).